We begin with the raw amino-acid sequence, 833 residues long: Glycerol-3-phosphate acyltransferase (833 aa).

Positions 309-314 match the HXXXXD motif motif; sequence CHRSHI.

It belongs to the GPAT/DAPAT family.

Its subcellular location is the cell inner membrane. It catalyses the reaction sn-glycerol 3-phosphate + an acyl-CoA = a 1-acyl-sn-glycero-3-phosphate + CoA. Its pathway is phospholipid metabolism; CDP-diacylglycerol biosynthesis; CDP-diacylglycerol from sn-glycerol 3-phosphate: step 1/3. This chain is Glycerol-3-phosphate acyltransferase, found in Pseudomonas savastanoi pv. phaseolicola (strain 1448A / Race 6) (Pseudomonas syringae pv. phaseolicola (strain 1448A / Race 6)).